A 317-amino-acid polypeptide reads, in one-letter code: Small ribosomal subunit protein uS2 (317 aa).

Position 2 is an N-acetylserine (Ser2). 2 laminin-binding regions span residues 161-180 and 205-229; these read IPCNNKGHHSVGLMWWMLSR and RDPEEIEKEEQAAAEKAVGKEEFQG. [DE]-W-[ST] repeat units lie at residues 230–232 and 245–247; these read EWT and DWS. The tract at residues 242-317 is laminin-binding; that stretch reads EVADWSEGVA…EWGGASADWS (76 aa). Residues 271-284 are compositionally biased toward low complexity; that stretch reads EAAAPSKAPAAAEG. The tract at residues 271–317 is disordered; sequence EAAAPSKAPAAAEGFAEDWSAQPATEDWSAAPTAQATEWGGASADWS. 3 [DE]-W-[ST] repeats span residues 288–290, 297–299, and 315–317; these read DWS.

The protein belongs to the universal ribosomal protein uS2 family. As to quaternary structure, monomer (37LRP) and homodimer (67LR). Component of the small ribosomal subunit. Mature ribosomes consist of a small (40S) and a large (60S) subunit. The 40S subunit contains about 33 different proteins and 1 molecule of RNA (18S). The 60S subunit contains about 49 different proteins and 3 molecules of RNA (28S, 5.8S and 5S). Interacts with rps21. Interacts with several laminins including at least lamb1. Interacts with mdk. In terms of processing, acylated. Acylation may be a prerequisite for conversion of the monomeric 37 kDa laminin receptor precursor (37LRP) to the mature dimeric 67 kDa laminin receptor (67LR), and may provide a mechanism for membrane association. Cleaved by stromelysin-3 (ST3) at the cell surface. Cleavage by stromelysin-3 may be a mechanism to alter cell-extracellular matrix interactions.

Its subcellular location is the cell membrane. It is found in the cytoplasm. The protein localises to the nucleus. Required for the assembly and/or stability of the 40S ribosomal subunit. Required for the processing of the 20S rRNA-precursor to mature 18S rRNA in a late step of the maturation of 40S ribosomal subunits. Also functions as a cell surface receptor for laminin. Plays a role in cell adhesion to the basement membrane and in the consequent activation of signaling transduction pathways. May play a role in cell fate determination and tissue morphogenesis. The protein is Small ribosomal subunit protein uS2 (rpsa) of Salmo salar (Atlantic salmon).